A 158-amino-acid chain; its full sequence is MTDALTRIYVDADACPVKDEVYKVAERHHLPVTLVAGGFIRVPQHPLIERVAAGSGMDAADDWIAERIKPGDIVITADIPLASRCVKAGATAIAPNGKPFTEESIGMTLAVRNLMTDLRSTGEITGGPRAFSPRDRSTFLSALDSAIRRIARRRAAPT.

This sequence belongs to the UPF0178 family.

This is UPF0178 protein Rpal_2485 from Rhodopseudomonas palustris (strain TIE-1).